We begin with the raw amino-acid sequence, 912 residues long: Probable transmembrane GTPase FZO-like, chloroplastic (912 aa).

Residues 1 to 54 (MRTLISHRQCVTSPFLISAASPPFPGRCFKLSSFTPPRHRRFSSLSIRNISHES) constitute a chloroplast transit peptide. A disordered region spans residues 51 to 71 (SHESADQTSSSRPRTLYPGGY). At 55-773 (ADQTSSSRPR…SKRLEQDIRE (719 aa)) the chain is on the stromal side. Residues 359 to 364 (NSGKST) and Ser521 contribute to the GTP site. The helical transmembrane segment at 774–794 (VFFVTVGGLGAAGLSASLLTS) threads the bilayer. At 795–801 (VLPTTLE) the chain is on the chloroplast intermembrane side. A helical transmembrane segment spans residues 802–822 (DLLALGLCSAGGYVAIANFPY). Topologically, residues 823-912 (RRQAIIGKVN…LHVSRDEMRL (90 aa)) are stromal. Positions 877 to 904 (DRLLGIQKELSDIRSKLQLLQVDIDNLH) form a coiled coil.

Belongs to the TRAFAC class dynamin-like GTPase superfamily. Dynamin/Fzo/YdjA family. Mitofusin subfamily.

Its subcellular location is the plastid. It localises to the chloroplast inner membrane. The protein localises to the chloroplast thylakoid membrane. Functionally, probable membrane-remodeling GTPase that plays a unique role in the in the determination of thylakoid and chloroplast morphology and regulates organization of the thylakoid network. Not involved in the determination of mitochondrial morphology or ultrastructure. This is Probable transmembrane GTPase FZO-like, chloroplastic from Arabidopsis thaliana (Mouse-ear cress).